A 103-amino-acid chain; its full sequence is Small ribosomal subunit protein uS10 (103 aa).

This sequence belongs to the universal ribosomal protein uS10 family. In terms of assembly, part of the 30S ribosomal subunit.

Functionally, involved in the binding of tRNA to the ribosomes. The polypeptide is Small ribosomal subunit protein uS10 (Tolumonas auensis (strain DSM 9187 / NBRC 110442 / TA 4)).